Reading from the N-terminus, the 118-residue chain is Large ribosomal subunit protein bL19 (118 aa).

Belongs to the bacterial ribosomal protein bL19 family.

In terms of biological role, this protein is located at the 30S-50S ribosomal subunit interface and may play a role in the structure and function of the aminoacyl-tRNA binding site. In Campylobacter concisus (strain 13826), this protein is Large ribosomal subunit protein bL19.